The sequence spans 200 residues: Snake venom serine protease VaSP1 (200 aa).

Positions 1–200 (VIGGDECNIN…EIQGIVSYGK (200 aa)) constitute a Peptidase S1 domain. Catalysis depends on charge relay system residues aspartate 88 and serine 182.

In terms of assembly, monomer. Post-translationally, N-glycosylated. The protein exist in multiple isoforms. Expressed by the venom gland.

The protein resides in the secreted. Inhibited by Pefabloc (90% inhibition), DTT (90%), Zn(2+) (80%), trypsin inhibitor II (50%), and benzamidine (45%), but not inhibited by EDTA, Ca(2+), Mg(2+) and L-Cys. Its function is as follows. Snake venom serine protease active on several blood coagulation enzymes. It completely cleaves fibrinogen Aalpha chain (FGA) after 120 minutes, partially cleaves Bbeta chain (FGB) (overnight) and has no activity on gamma chain. It does not release fibrinopeptides A and/or B exclusively, since the enzyme does not provoke fibrin polymerisation. It also degrades fibrin as efficiently as plasmin, and exhibits potent ability to cleave plasminogen and prothrombin, as well as heavy chain of factor X (F10). In vitro, it cleaves insulin B-chain (at positions His38-Leu39, Ala40-Leu41 and Tyr16-Leu17). The sequence is that of Snake venom serine protease VaSP1 from Vipera ammodytes ammodytes (Western sand viper).